Consider the following 361-residue polypeptide: MLYWLIDLSSSIPAFNVFRYITFRTGGAVVTGALFVFLCGPWIINNLRLRQGKGQPIRSDGPQSHLVTKKGTPTMGGLMILSGLTVGTVLWANPVNPYVWIVLAVTLGFGFVGFYDDYMKVTKQTHAGISGRTRLLIEFAIAGAACFALVWLGRSSLSSSLVIPFFKEVVLNLGWYFVIFGAFVIVGAGNAVNLTDGLDGLAIVPVMIAAASFGLIAYLAGNAVFADYLQINYVAGTGELAVLCGALLGAGLGFLWFNAPPASIFMGDTGSLALGGMLGSIAVAVKHEIVLAVIGGLFVLEAVSVIVQVASFKLTGKRVFRMAPIHHHFEQKGWTEPQIVIRFWIIAVMLALAGLATLKLR.

Transmembrane regions (helical) follow at residues 25 to 45 (TGGAVVTGALFVFLCGPWIIN), 72 to 92 (TPTMGGLMILSGLTVGTVLWA), 95 to 115 (VNPYVWIVLAVTLGFGFVGFY), 133 to 153 (TRLLIEFAIAGAACFALVWLG), 169 to 189 (VVLNLGWYFVIFGAFVIVGAG), 200 to 220 (GLAIVPVMIAAASFGLIAYLA), 240 to 260 (LAVLCGALLGAGLGFLWFNAP), 264 to 284 (IFMGDTGSLALGGMLGSIAVA), 289 to 309 (IVLAVIGGLFVLEAVSVIVQV), and 338 to 358 (QIVIRFWIIAVMLALAGLATL).

This sequence belongs to the glycosyltransferase 4 family. MraY subfamily. It depends on Mg(2+) as a cofactor.

The protein localises to the cell inner membrane. It catalyses the reaction UDP-N-acetyl-alpha-D-muramoyl-L-alanyl-gamma-D-glutamyl-meso-2,6-diaminopimeloyl-D-alanyl-D-alanine + di-trans,octa-cis-undecaprenyl phosphate = di-trans,octa-cis-undecaprenyl diphospho-N-acetyl-alpha-D-muramoyl-L-alanyl-D-glutamyl-meso-2,6-diaminopimeloyl-D-alanyl-D-alanine + UMP. The protein operates within cell wall biogenesis; peptidoglycan biosynthesis. Catalyzes the initial step of the lipid cycle reactions in the biosynthesis of the cell wall peptidoglycan: transfers peptidoglycan precursor phospho-MurNAc-pentapeptide from UDP-MurNAc-pentapeptide onto the lipid carrier undecaprenyl phosphate, yielding undecaprenyl-pyrophosphoryl-MurNAc-pentapeptide, known as lipid I. This Rhodopseudomonas palustris (strain BisB5) protein is Phospho-N-acetylmuramoyl-pentapeptide-transferase.